The following is a 247-amino-acid chain: tRNA pseudouridine synthase A (247 aa).

Residue Asp52 is the Nucleophile of the active site. Tyr113 serves as a coordination point for substrate.

The protein belongs to the tRNA pseudouridine synthase TruA family. Homodimer.

It catalyses the reaction uridine(38/39/40) in tRNA = pseudouridine(38/39/40) in tRNA. In terms of biological role, formation of pseudouridine at positions 38, 39 and 40 in the anticodon stem and loop of transfer RNAs. The protein is tRNA pseudouridine synthase A of Rhizobium meliloti (strain 1021) (Ensifer meliloti).